The sequence spans 315 residues: Calumenin (315 aa).

The first 19 residues, 1–19, serve as a signal peptide directing secretion; that stretch reads MDLRQFLMCLSLCTAFALS. Phosphoserine is present on S44. The residue at position 47 (Y47) is a Phosphotyrosine. T65 carries the phosphothreonine modification. 6 consecutive EF-hand domains span residues 68 to 103, 104 to 139, 151 to 186, 188 to 223, 229 to 264, and 265 to 300; these read ESKERLGKIVSKIDDDKDGFVTVDELKDWIKFAQKR, WIYEDVERQWKGHDLNEDGLVSWEEYKNATYGYVLD, QMMVRDERRFKMADKDGDLIATKEEFTAFLHPEEYD, MKDIVVQETMEDIDKNADGFIDLEEYIGDMYSHDGN, WVKTEREQFVEFRDKNRDGKMDKEETKDWILPSDYD, and HAEAEARHLVYESDQNKDGKLTKEEIVDKYDLFVGS. S69 is modified (phosphoserine). Ca(2+)-binding residues include D81, D83, D85, E92, D117, N119, D121, and E128. Residue N131 is glycosylated (N-linked (GlcNAc...) asparagine). D164 contributes to the Ca(2+) binding site. K165 is subject to N6-acetyllysine. Positions 166, 168, 175, 201, 203, 205, 212, 242, 244, 246, 248, and 253 each coordinate Ca(2+). T254 carries the phosphothreonine modification. Phosphoserine occurs at positions 261 and 277. Ca(2+) contacts are provided by D278, N280, D282, K284, and E289. Positions 312–315 match the Prevents secretion from ER motif; that stretch reads HDEF.

Belongs to the CREC family. Interacts with GGCX.

The protein localises to the endoplasmic reticulum membrane. It is found in the golgi apparatus. The protein resides in the secreted. It localises to the melanosome. Its subcellular location is the sarcoplasmic reticulum lumen. Functionally, involved in regulation of vitamin K-dependent carboxylation of multiple N-terminal glutamate residues. Seems to inhibit gamma-carboxylase GGCX. Binds 7 calcium ions with a low affinity. The polypeptide is Calumenin (CALU) (Pongo abelii (Sumatran orangutan)).